The following is an 89-amino-acid chain: DNA-directed RNA polymerase subunit Rpo6 (89 aa).

Belongs to the archaeal Rpo6/eukaryotic RPB6 RNA polymerase subunit family. Part of the 13-subunit RNA polymerase complex.

It is found in the cytoplasm. It catalyses the reaction RNA(n) + a ribonucleoside 5'-triphosphate = RNA(n+1) + diphosphate. In terms of biological role, DNA-dependent RNA polymerase (RNAP) catalyzes the transcription of DNA into RNA using the four ribonucleoside triphosphates as substrates. Functionally, reconstitution experiments show this subunit is required for basic activity. The protein is DNA-directed RNA polymerase subunit Rpo6 of Sulfolobus acidocaldarius (strain ATCC 33909 / DSM 639 / JCM 8929 / NBRC 15157 / NCIMB 11770).